We begin with the raw amino-acid sequence, 739 residues long: Phosphoribosylformylglycinamidine synthase subunit PurL (739 aa).

Residue His53 is part of the active site. ATP-binding residues include Tyr56 and Lys95. Glu97 serves as a coordination point for Mg(2+). Residues 98 to 101 (SHNH) and Arg120 contribute to the substrate site. The Proton acceptor role is filled by His99. Asp121 contributes to the Mg(2+) binding site. Gln244 serves as a coordination point for substrate. Mg(2+) is bound at residue Asp274. 318–320 (ESQ) lines the substrate pocket. 2 residues coordinate ATP: Asp501 and Gly538. Position 539 (Asn539) interacts with Mg(2+). Residue Ser541 coordinates substrate.

This sequence belongs to the FGAMS family. As to quaternary structure, monomer. Part of the FGAM synthase complex composed of 1 PurL, 1 PurQ and 2 PurS subunits.

The protein localises to the cytoplasm. It catalyses the reaction N(2)-formyl-N(1)-(5-phospho-beta-D-ribosyl)glycinamide + L-glutamine + ATP + H2O = 2-formamido-N(1)-(5-O-phospho-beta-D-ribosyl)acetamidine + L-glutamate + ADP + phosphate + H(+). It functions in the pathway purine metabolism; IMP biosynthesis via de novo pathway; 5-amino-1-(5-phospho-D-ribosyl)imidazole from N(2)-formyl-N(1)-(5-phospho-D-ribosyl)glycinamide: step 1/2. Part of the phosphoribosylformylglycinamidine synthase complex involved in the purines biosynthetic pathway. Catalyzes the ATP-dependent conversion of formylglycinamide ribonucleotide (FGAR) and glutamine to yield formylglycinamidine ribonucleotide (FGAM) and glutamate. The FGAM synthase complex is composed of three subunits. PurQ produces an ammonia molecule by converting glutamine to glutamate. PurL transfers the ammonia molecule to FGAR to form FGAM in an ATP-dependent manner. PurS interacts with PurQ and PurL and is thought to assist in the transfer of the ammonia molecule from PurQ to PurL. The protein is Phosphoribosylformylglycinamidine synthase subunit PurL of Listeria innocua serovar 6a (strain ATCC BAA-680 / CLIP 11262).